Consider the following 138-residue polypeptide: MLQPSRRKFRKEQKGRNTGIATRGANVSFGDFGLKATERGRLTARQIEAARRAISRHVKRGGRIWIRIFPDKPISQKPAEVRMGNGKGNPEYYVAEIQPGKVLYEINGVPEELAREAFTLAAAKLPLRCTFVSRQIGA.

The segment covering 1–13 (MLQPSRRKFRKEQ) has biased composition (basic residues). The disordered stretch occupies residues 1-22 (MLQPSRRKFRKEQKGRNTGIAT).

Belongs to the universal ribosomal protein uL16 family. In terms of assembly, part of the 50S ribosomal subunit.

Binds 23S rRNA and is also seen to make contacts with the A and possibly P site tRNAs. This is Large ribosomal subunit protein uL16 from Methylibium petroleiphilum (strain ATCC BAA-1232 / LMG 22953 / PM1).